The chain runs to 184 residues: Ribosome maturation factor RimM (184 aa).

The PRC barrel domain occupies 101–180; that stretch reads EGEFFYCDLV…KITTHNAKTL (80 aa).

The protein belongs to the RimM family. In terms of assembly, binds ribosomal protein uS19.

It localises to the cytoplasm. An accessory protein needed during the final step in the assembly of 30S ribosomal subunit, possibly for assembly of the head region. Essential for efficient processing of 16S rRNA. May be needed both before and after RbfA during the maturation of 16S rRNA. It has affinity for free ribosomal 30S subunits but not for 70S ribosomes. The chain is Ribosome maturation factor RimM from Helicobacter pylori (strain ATCC 700392 / 26695) (Campylobacter pylori).